A 202-amino-acid polypeptide reads, in one-letter code: Small ribosomal subunit protein uS4c (202 aa).

The region spanning 90 to 159 is the S4 RNA-binding domain; the sequence is MRLDNIIFRL…TKNYEFSQTY (70 aa).

This sequence belongs to the universal ribosomal protein uS4 family. As to quaternary structure, part of the 30S ribosomal subunit. Contacts protein S5. The interaction surface between S4 and S5 is involved in control of translational fidelity.

Its subcellular location is the plastid. The protein resides in the chloroplast. Functionally, one of the primary rRNA binding proteins, it binds directly to 16S rRNA where it nucleates assembly of the body of the 30S subunit. In terms of biological role, with S5 and S12 plays an important role in translational accuracy. In Huperzia lucidula (Shining clubmoss), this protein is Small ribosomal subunit protein uS4c (rps4).